The sequence spans 471 residues: Cell division protein FtsP (471 aa).

The tat-type signal signal peptide spans 1–27; that stretch reads MSLNRRQFIQASGLALCAGMTPLAAKA. The region spanning 229–287 is the Plastocyanin-like domain; the sequence is VRLRLLNASNSRRYVMRLSDGRAMNVIASDQGLLPAPMAVNQLSLAPGERREILIDMSQ.

This sequence belongs to the FtsP family. In terms of processing, predicted to be exported by the Tat system. The position of the signal peptide cleavage has not been experimentally proven.

It localises to the periplasm. In terms of biological role, cell division protein that is required for growth during stress conditions. May be involved in protecting or stabilizing the divisomal assembly under conditions of stress. This Pectobacterium atrosepticum (strain SCRI 1043 / ATCC BAA-672) (Erwinia carotovora subsp. atroseptica) protein is Cell division protein FtsP.